The sequence spans 576 residues: MEAKGKVVGVIGNLVTIEMVGTVSMNEIVFIKTGGQSLKAEIIRIRDGEVDAQVFEMTRGIAVGDDVEFTDKLLTVELGPGLLSQVYDGLQNPLPELATKCGFFLERGLYLSALDRNKKWSFNATAKVGDFVVAGDFLGFVIEGTINHQIMVPFDRRDSYRIIEIVGDGDYTVDDKIAVIEDDAGGKHIITMSFHWPVKVPVTSYKKRLIPNETMVTQTRIIDTFFPVAKGGTFCIPGPFGAGKTVLQQVTSRNADVDIVIIAACGERAGEVVETLKEFPELTDPRTGKSLMERTCIICNTSSMPVAAREASVYTAITIGEYYRQMGLDILLLADSTSRWAQAMREMSGRLEEIPGDEAFPAYLESVIASFYERAGVVVLNNGSVGSVTVGGSVSPAGGNFEEPVTQATLKVVGAFHGLTRERSDARKFPAINPLDSWSKYRGVVEYEATEYARAFLVKGNEVNQMMRVVGEDGVSIDDFVVYLKSELLDSCYLQQNSFDSVDAAVSFERQNYMFNILYKILQSDFKFENKLEARSFINDLRQNILDMNLAPFKQEKFNKLEINLKNLLRSKKLDF.

Residue 238 to 245 participates in ATP binding; that stretch reads GPFGAGKT.

It belongs to the ATPase alpha/beta chains family.

It catalyses the reaction ATP + H2O + 4 H(+)(in) = ADP + phosphate + 5 H(+)(out). Functionally, produces ATP from ADP in the presence of a proton gradient across the membrane. The V-type alpha chain is a catalytic subunit. This Borrelia duttonii (strain Ly) protein is V-type ATP synthase alpha chain.